The following is a 583-amino-acid chain: Penicillin-binding protein activator LpoA (583 aa).

A signal peptide spans 1–24; the sequence is MATILKQKLKTFFVPTAITLLLSA. The N-palmitoyl cysteine moiety is linked to residue C25. C25 carries the S-diacylglycerol cysteine lipid modification.

The protein belongs to the LpoA family. In terms of assembly, interacts with PBP1a.

It is found in the cell outer membrane. Regulator of peptidoglycan synthesis that is essential for the function of penicillin-binding protein 1A (PBP1a). The polypeptide is Penicillin-binding protein activator LpoA (Haemophilus ducreyi (strain 35000HP / ATCC 700724)).